Here is a 131-residue protein sequence, read N- to C-terminus: Profilin-8 (131 aa).

Residues cysteine 13 and cysteine 115 are joined by a disulfide bond. The short motif at 81–97 (AVIRGKKGAGGITIKKT) is the Involved in PIP2 interaction element. Threonine 111 is modified (phosphothreonine).

Belongs to the profilin family. Occurs in many kinds of cells as a complex with monomeric actin in a 1:1 ratio. In terms of processing, phosphorylated by MAP kinases.

Its subcellular location is the cytoplasm. It is found in the cytoskeleton. Functionally, binds to actin and affects the structure of the cytoskeleton. At high concentrations, profilin prevents the polymerization of actin, whereas it enhances it at low concentrations. This is Profilin-8 from Olea europaea (Common olive).